A 155-amino-acid polypeptide reads, in one-letter code: Endoribonuclease YbeY (155 aa).

3 residues coordinate Zn(2+): His-114, His-118, and His-124.

The protein belongs to the endoribonuclease YbeY family. It depends on Zn(2+) as a cofactor.

It is found in the cytoplasm. In terms of biological role, single strand-specific metallo-endoribonuclease involved in late-stage 70S ribosome quality control and in maturation of the 3' terminus of the 16S rRNA. The polypeptide is Endoribonuclease YbeY (Shigella dysenteriae serotype 1 (strain Sd197)).